A 302-amino-acid chain; its full sequence is tRNA-cytidine(32) 2-sulfurtransferase (302 aa).

Positions 44–49 match the PP-loop motif motif; it reads SGGKDS. [4Fe-4S] cluster contacts are provided by cysteine 119, cysteine 122, and cysteine 210.

It belongs to the TtcA family. Homodimer. The cofactor is Mg(2+). It depends on [4Fe-4S] cluster as a cofactor.

It localises to the cytoplasm. It catalyses the reaction cytidine(32) in tRNA + S-sulfanyl-L-cysteinyl-[cysteine desulfurase] + AH2 + ATP = 2-thiocytidine(32) in tRNA + L-cysteinyl-[cysteine desulfurase] + A + AMP + diphosphate + H(+). It functions in the pathway tRNA modification. Catalyzes the ATP-dependent 2-thiolation of cytidine in position 32 of tRNA, to form 2-thiocytidine (s(2)C32). The sulfur atoms are provided by the cysteine/cysteine desulfurase (IscS) system. This chain is tRNA-cytidine(32) 2-sulfurtransferase, found in Teredinibacter turnerae (strain ATCC 39867 / T7901).